Reading from the N-terminus, the 532-residue chain is Probable NAD kinase 1 (532 aa).

Over residues 1–26 (MSLDELPHKVSDERVNHDTVTSHESE) the composition is skewed to basic and acidic residues. Residues 1–32 (MSLDELPHKVSDERVNHDTVTSHESEIGSGSI) form a disordered region.

This sequence belongs to the NAD kinase family.

It catalyses the reaction NAD(+) + ATP = ADP + NADP(+) + H(+). This is Probable NAD kinase 1 from Oryza sativa subsp. japonica (Rice).